The following is a 385-amino-acid chain: MGNWLLPEGLADVLPAEARRIEELRRELLDLYRTYGFELVAPPLVEYIDSLLSGMGGDLNLYTCKLIDQLSGRTLGVRADMTTQVSRIDAHLLNRNSVTRLCYCGTVLHARPADLLSSRELLQIGAEIYGHVGFEADLEILQLVLETVAIAGVSRPRLDLSHPGVVKALFDADPAAAAISGRIIMLLREKDVAGLAELAGVEPALRADTLAALGALVRLYGEIDVIDRARQELPALPALVLALDELERLARAVPDVALGLDLADVGGYGYHSGVTFELYAQGWHDALVRGGRYDDVGRAFGRARPATGFSLDLRKLAAGLSPAEPGRAIRAPWGQDPALVGAVRALRHTGEIVVQVLPGHEHDQDEFVCDRELVLQDGAWTVKTL.

The protein belongs to the class-II aminoacyl-tRNA synthetase family. HisZ subfamily. In terms of assembly, heteromultimer composed of HisG and HisZ subunits.

It is found in the cytoplasm. It functions in the pathway amino-acid biosynthesis; L-histidine biosynthesis; L-histidine from 5-phospho-alpha-D-ribose 1-diphosphate: step 1/9. Its function is as follows. Required for the first step of histidine biosynthesis. May allow the feedback regulation of ATP phosphoribosyltransferase activity by histidine. The chain is ATP phosphoribosyltransferase regulatory subunit from Bordetella avium (strain 197N).